The sequence spans 351 residues: Histidinol-phosphate aminotransferase 2 (351 aa).

K210 is subject to N6-(pyridoxal phosphate)lysine.

Belongs to the class-II pyridoxal-phosphate-dependent aminotransferase family. Histidinol-phosphate aminotransferase subfamily. Homodimer. Pyridoxal 5'-phosphate is required as a cofactor.

The catalysed reaction is L-histidinol phosphate + 2-oxoglutarate = 3-(imidazol-4-yl)-2-oxopropyl phosphate + L-glutamate. It participates in amino-acid biosynthesis; L-histidine biosynthesis; L-histidine from 5-phospho-alpha-D-ribose 1-diphosphate: step 7/9. The sequence is that of Histidinol-phosphate aminotransferase 2 (hisC2) from Rhizobium meliloti (strain 1021) (Ensifer meliloti).